We begin with the raw amino-acid sequence, 296 residues long: NAD kinase (296 aa).

Asp74 acts as the Proton acceptor in catalysis. NAD(+) contacts are provided by residues 74-75 (DG), 148-149 (ND), Arg176, Asp178, and 189-194 (TAYALS).

Belongs to the NAD kinase family. A divalent metal cation serves as cofactor.

The protein localises to the cytoplasm. The catalysed reaction is NAD(+) + ATP = ADP + NADP(+) + H(+). Functionally, involved in the regulation of the intracellular balance of NAD and NADP, and is a key enzyme in the biosynthesis of NADP. Catalyzes specifically the phosphorylation on 2'-hydroxyl of the adenosine moiety of NAD to yield NADP. This chain is NAD kinase, found in Nitrosomonas europaea (strain ATCC 19718 / CIP 103999 / KCTC 2705 / NBRC 14298).